The chain runs to 120 residues: NAD(P)H-quinone oxidoreductase subunit 3, chloroplastic (120 aa).

A run of 3 helical transmembrane segments spans residues 9 to 29, 64 to 84, and 88 to 108; these read IFWA…LISG, MFAL…PWAM, and VLGV…IVGS.

Belongs to the complex I subunit 3 family. NDH is composed of at least 16 different subunits, 5 of which are encoded in the nucleus.

Its subcellular location is the plastid. The protein localises to the chloroplast thylakoid membrane. It catalyses the reaction a plastoquinone + NADH + (n+1) H(+)(in) = a plastoquinol + NAD(+) + n H(+)(out). It carries out the reaction a plastoquinone + NADPH + (n+1) H(+)(in) = a plastoquinol + NADP(+) + n H(+)(out). Functionally, NDH shuttles electrons from NAD(P)H:plastoquinone, via FMN and iron-sulfur (Fe-S) centers, to quinones in the photosynthetic chain and possibly in a chloroplast respiratory chain. The immediate electron acceptor for the enzyme in this species is believed to be plastoquinone. Couples the redox reaction to proton translocation, and thus conserves the redox energy in a proton gradient. The protein is NAD(P)H-quinone oxidoreductase subunit 3, chloroplastic of Illicium oligandrum (Star anise).